Reading from the N-terminus, the 306-residue chain is Tyrosine--tRNA ligase (306 aa).

The L-tyrosine site is built by tyrosine 32 and glutamate 36. The 'HIGH' region signature appears at 37-45 (PSGKIHLGH). A tyrosine region spans residues 151-158 (YPIMQVND). Glutamine 173 lines the L-tyrosine pocket. The 'KMSKS' region motif lies at 204–208 (KMSSS). Serine 207 serves as a coordination point for ATP. Interaction with t-RNA regions lie at residues 228–231 (KAYC) and 283–288 (HPMDLK).

The protein belongs to the class-I aminoacyl-tRNA synthetase family. TyrS type 3 subfamily. In terms of assembly, homodimer.

The protein resides in the cytoplasm. The enzyme catalyses tRNA(Tyr) + L-tyrosine + ATP = L-tyrosyl-tRNA(Tyr) + AMP + diphosphate + H(+). Catalyzes the attachment of tyrosine to tRNA(Tyr) in a two-step reaction: tyrosine is first activated by ATP to form Tyr-AMP and then transferred to the acceptor end of tRNA(Tyr). In Methanocaldococcus jannaschii (strain ATCC 43067 / DSM 2661 / JAL-1 / JCM 10045 / NBRC 100440) (Methanococcus jannaschii), this protein is Tyrosine--tRNA ligase (tyrS).